The following is a 714-amino-acid chain: Developmentally-regulated protein kinase 1 (714 aa).

2 disordered regions span residues 88–122 (NNNI…NNFN) and 174–266 (CNMI…IINN). Composition is skewed to low complexity over residues 174-200 (CNMI…NNNN), 209-227 (PSSN…TTSS), and 240-266 (NFNQ…IINN). The region spanning 334-589 (FNFYGSLGSG…SCSIRNHKWF (256 aa)) is the Protein kinase domain. ATP contacts are provided by residues 340-348 (LGSGSFGTA) and lysine 363. Catalysis depends on aspartate 457, which acts as the Proton acceptor. Position 488 is a phosphothreonine (threonine 488).

This sequence belongs to the protein kinase superfamily. AGC Ser/Thr protein kinase family.

The enzyme catalyses L-seryl-[protein] + ATP = O-phospho-L-seryl-[protein] + ADP + H(+). It catalyses the reaction L-threonyl-[protein] + ATP = O-phospho-L-threonyl-[protein] + ADP + H(+). The polypeptide is Developmentally-regulated protein kinase 1 (pkaD) (Dictyostelium discoideum (Social amoeba)).